Here is a 195-residue protein sequence, read N- to C-terminus: Pyridoxal 5'-phosphate synthase subunit PdxT (195 aa).

Residue 46–48 (GES) coordinates L-glutamine. The active-site Nucleophile is C78. Residues R107 and 136 to 137 (IR) contribute to the L-glutamine site. Residues H173 and E175 each act as charge relay system in the active site.

Belongs to the glutaminase PdxT/SNO family. In the presence of PdxS, forms a dodecamer of heterodimers. Only shows activity in the heterodimer.

It catalyses the reaction aldehydo-D-ribose 5-phosphate + D-glyceraldehyde 3-phosphate + L-glutamine = pyridoxal 5'-phosphate + L-glutamate + phosphate + 3 H2O + H(+). The catalysed reaction is L-glutamine + H2O = L-glutamate + NH4(+). It participates in cofactor biosynthesis; pyridoxal 5'-phosphate biosynthesis. Catalyzes the hydrolysis of glutamine to glutamate and ammonia as part of the biosynthesis of pyridoxal 5'-phosphate. The resulting ammonia molecule is channeled to the active site of PdxS. The polypeptide is Pyridoxal 5'-phosphate synthase subunit PdxT (Dehalococcoides mccartyi (strain ATCC BAA-2100 / JCM 16839 / KCTC 5957 / BAV1)).